We begin with the raw amino-acid sequence, 461 residues long: A-type ATP synthase subunit B (461 aa).

It belongs to the ATPase alpha/beta chains family. In terms of assembly, has multiple subunits with at least A(3), B(3), C, D, E, F, H, I and proteolipid K(x).

The protein localises to the cell membrane. Component of the A-type ATP synthase that produces ATP from ADP in the presence of a proton gradient across the membrane. The B chain is a regulatory subunit. The polypeptide is A-type ATP synthase subunit B (Nitrosopumilus maritimus (strain SCM1)).